The chain runs to 317 residues: Lipase 1 (317 aa).

Residues 1–18 (MLLKRLCFAALFSLSMVG) form the signal peptide. Residue Cys-19 is the site of N-palmitoyl cysteine attachment. Cys-19 is lipidated: S-diacylglycerol cysteine. The AB hydrolase-1 domain occupies 69–296 (PLLLIHGFGG…MEDVGHVPMV (228 aa)). His-74 is a catalytic residue. Residue Ser-142 is the Nucleophile of the active site. Active-site charge relay system residues include Glu-270 and His-292.

It is found in the cell outer membrane. It catalyses the reaction a triacylglycerol + H2O = a diacylglycerol + a fatty acid + H(+). In Psychrobacter immobilis, this protein is Lipase 1 (lip1).